A 129-amino-acid polypeptide reads, in one-letter code: uncharacterized protein (129 aa).

Transmembrane regions (helical) follow at residues 22–42, 55–75, and 88–108; these read LASS…FFFF, VGSF…FFFF, and LPFT…FFFF.

It localises to the membrane. This is an uncharacterized protein from Saccharomyces cerevisiae (strain ATCC 204508 / S288c) (Baker's yeast).